The following is a 185-amino-acid chain: Putative manganese efflux pump MntP (185 aa).

6 helical membrane-spanning segments follow: residues 3-23 (PFAV…VSVG), 41-61 (AVFG…GVAA), 70-90 (HWLA…AAVW), 101-121 (SFTV…AVGV), 123-143 (LAFL…ATFL), and 165-185 (AVAG…HLTA).

It belongs to the MntP (TC 9.B.29) family.

Its subcellular location is the cell inner membrane. Functionally, probably functions as a manganese efflux pump. The polypeptide is Putative manganese efflux pump MntP (Bradyrhizobium sp. (strain BTAi1 / ATCC BAA-1182)).